Consider the following 178-residue polypeptide: Large ribosomal subunit protein uL6 (178 aa).

This sequence belongs to the universal ribosomal protein uL6 family. Part of the 50S ribosomal subunit.

In terms of biological role, this protein binds to the 23S rRNA, and is important in its secondary structure. It is located near the subunit interface in the base of the L7/L12 stalk, and near the tRNA binding site of the peptidyltransferase center. This is Large ribosomal subunit protein uL6 from Campylobacter curvus (strain 525.92).